Reading from the N-terminus, the 295-residue chain is Glutamate 5-kinase (295 aa).

Lys-9 contributes to the ATP binding site. The substrate site is built by Ser-49, Asp-136, and Asn-148. ATP contacts are provided by residues 168–169 and 210–216; these read TD and TGGMLTK.

This sequence belongs to the glutamate 5-kinase family.

Its subcellular location is the cytoplasm. The catalysed reaction is L-glutamate + ATP = L-glutamyl 5-phosphate + ADP. It participates in amino-acid biosynthesis; L-proline biosynthesis; L-glutamate 5-semialdehyde from L-glutamate: step 1/2. Functionally, catalyzes the transfer of a phosphate group to glutamate to form L-glutamate 5-phosphate. The chain is Glutamate 5-kinase from Neisseria gonorrhoeae (strain NCCP11945).